Here is a 364-residue protein sequence, read N- to C-terminus: Methylthioribose-1-phosphate isomerase (364 aa).

Asp254 acts as the Proton donor in catalysis.

Belongs to the eIF-2B alpha/beta/delta subunits family. MtnA subfamily.

It is found in the cytoplasm. It localises to the nucleus. It catalyses the reaction 5-(methylsulfanyl)-alpha-D-ribose 1-phosphate = 5-(methylsulfanyl)-D-ribulose 1-phosphate. Its pathway is amino-acid biosynthesis; L-methionine biosynthesis via salvage pathway; L-methionine from S-methyl-5-thio-alpha-D-ribose 1-phosphate: step 1/6. Its function is as follows. Catalyzes the interconversion of methylthioribose-1-phosphate (MTR-1-P) into methylthioribulose-1-phosphate (MTRu-1-P). This Drosophila simulans (Fruit fly) protein is Methylthioribose-1-phosphate isomerase.